The sequence spans 165 residues: 3-hydroxyacyl-[acyl-carrier-protein] dehydratase FabZ (165 aa).

Residue H68 is part of the active site.

It belongs to the thioester dehydratase family. FabZ subfamily.

It localises to the cytoplasm. The catalysed reaction is a (3R)-hydroxyacyl-[ACP] = a (2E)-enoyl-[ACP] + H2O. Its function is as follows. Involved in unsaturated fatty acids biosynthesis. Catalyzes the dehydration of short chain beta-hydroxyacyl-ACPs and long chain saturated and unsaturated beta-hydroxyacyl-ACPs. The chain is 3-hydroxyacyl-[acyl-carrier-protein] dehydratase FabZ from Methylobacterium sp. (strain 4-46).